The chain runs to 340 residues: tRNA N6-adenosine threonylcarbamoyltransferase (340 aa).

The Fe cation site is built by H111 and H115. Residues 134–138 (LVSGG), D167, G180, and N276 each bind substrate. D304 lines the Fe cation pocket.

Belongs to the KAE1 / TsaD family. The cofactor is Fe(2+).

The protein localises to the cytoplasm. It carries out the reaction L-threonylcarbamoyladenylate + adenosine(37) in tRNA = N(6)-L-threonylcarbamoyladenosine(37) in tRNA + AMP + H(+). In terms of biological role, required for the formation of a threonylcarbamoyl group on adenosine at position 37 (t(6)A37) in tRNAs that read codons beginning with adenine. Is involved in the transfer of the threonylcarbamoyl moiety of threonylcarbamoyl-AMP (TC-AMP) to the N6 group of A37, together with TsaE and TsaB. TsaD likely plays a direct catalytic role in this reaction. The polypeptide is tRNA N6-adenosine threonylcarbamoyltransferase (Helicobacter pylori (strain P12)).